Here is a 1253-residue protein sequence, read N- to C-terminus: Latent-transforming growth factor beta-binding protein 3 (1253 aa).

A signal peptide spans M1–A38. The N-linked (GlcNAc...) asparagine glycan is linked to N86. In terms of domain architecture, EGF-like 1 spans R106–Q138. 3 disulfides stabilise this stretch: C110–C120, C114–C126, and C128–C137. The disordered stretch occupies residues G244 to Q270. Positions G274–G328 constitute a TB 1 domain. Disulfide bonds link C276/C300, C286/C313, and C301/C316. N346 carries N-linked (GlcNAc...) asparagine glycosylation. Residues D352–I392 form the EGF-like 2; calcium-binding domain. 7 cysteine pairs are disulfide-bonded: C356–C367, C362–C376, C378–C391, C402–C425, C412–C437, C426–C440, and C427–C452. In terms of domain architecture, TB 2 spans S400–C452. Residues F475–L555 are disordered. One can recognise an EGF-like 3 domain in the interval E571–V612. Disulfide bonds link C575-C587, C582-C596, C598-C611, C617-C629, C622-C638, C661-C673, C667-C682, C684-C698, C745-C756, C751-C765, C767-C780, C786-C797, C792-C806, C808-C821, C827-C838, C833-C847, C849-C861, C867-C880, C874-C889, C891-C904, C916-C939, C926-C951, C940-C956, C941-C968, C994-C1007, C1002-C1016, C1018-C1031, C1037-C1048, C1043-C1057, C1059-C1072, C1113-C1127, and C1114-C1136. The 44-residue stretch at D613–V656 folds into the EGF-like 4; calcium-binding domain. The EGF-like 5; calcium-binding domain occupies D657–E699. One can recognise an EGF-like 6; calcium-binding domain in the interval D741–I781. The 41-residue stretch at D782–E822 folds into the EGF-like 7; calcium-binding domain. The EGF-like 8; calcium-binding domain maps to D823–C861. An N-linked (GlcNAc...) asparagine glycan is attached at N842. Residues D863 to E905 form the EGF-like 9; calcium-binding domain. Positions K914 to C968 constitute a TB 3 domain. N-linked (GlcNAc...) asparagine glycosylation occurs at N933. The region spanning D990–V1032 is the EGF-like 10; calcium-binding domain. The EGF-like 11; calcium-binding domain occupies D1033–C1072. The TB 4 domain occupies E1086–C1136. Positions T1138–D1148 are enriched in polar residues. The interval T1138–D1169 is disordered. The EGF-like 12; calcium-binding domain maps to D1204 to R1231. Cystine bridges form between C1208-C1223 and C1218-C1232. Residue N1225 is glycosylated (N-linked (GlcNAc...) asparagine).

Belongs to the LTBP family. Forms part of the large latent transforming growth factor beta (TGFB1) precursor complex; removal is essential for activation of complex. Interacts with EFEMP2. Post-translationally, contains hydroxylated asparagine residues. In terms of processing, two intrachain disulfide bonds from the TB3 domain are rearranged upon TGFB1 binding, and form interchain bonds with TGFB1 propeptide, anchoring it to the extracellular matrix.

It is found in the secreted. Its subcellular location is the extracellular space. The protein resides in the extracellular matrix. Its function is as follows. Key regulator of transforming growth factor beta (TGFB1, TGFB2 and TGFB3) that controls TGF-beta activation by maintaining it in a latent state during storage in extracellular space. Associates specifically via disulfide bonds with the Latency-associated peptide (LAP), which is the regulatory chain of TGF-beta, and regulates integrin-dependent activation of TGF-beta. This chain is Latent-transforming growth factor beta-binding protein 3 (Ltbp3), found in Mus musculus (Mouse).